Reading from the N-terminus, the 553-residue chain is Dihydrolipoyllysine-residue acetyltransferase component of pyruvate dehydrogenase complex (553 aa).

The Lipoyl-binding 1 domain occupies 2–77 (AFSVQMPALG…EVGGELAVIG (76 aa)). Lysine 43 is subject to N6-lipoyllysine. Residues 81–125 (DAGEAAAPAPEKVPAAQPESKPAPEPPPVQPTSGAPAGGDAKPVL) form a disordered region. Residues 84–100 (EAAAPAPEKVPAAQPES) are compositionally biased toward low complexity. Residues 101–110 (KPAPEPPPVQ) are compositionally biased toward pro residues. The Lipoyl-binding 2 domain maps to 121–196 (AKPVLMPELG…PVGGELARIG (76 aa)). Position 162 is an N6-lipoyllysine (lysine 162). Disordered regions lie at residues 204 to 238 (APAP…AGAA) and 278 to 321 (AAAE…TQKA). The segment covering 206-232 (APKPAPKPVPEPAPTPKAEPAPSPPAA) has biased composition (pro residues). The Peripheral subunit-binding (PSBD) domain occupies 243 to 280 (YVTPLVRKLASENNIDLAGVTGTGVGGRIRKQDVLAAA). Positions 288–300 (APAPAAQAAAAPA) are enriched in low complexity. Active-site residues include histidine 523 and aspartate 527.

It belongs to the 2-oxoacid dehydrogenase family. Forms a 24-polypeptide structural core with octahedral symmetry. Part of the PDH complex, consisting of multiple copies of AceE (E1), DlaT (E2) and Lpd (E3). Requires (R)-lipoate as cofactor.

The enzyme catalyses N(6)-[(R)-dihydrolipoyl]-L-lysyl-[protein] + acetyl-CoA = N(6)-[(R)-S(8)-acetyldihydrolipoyl]-L-lysyl-[protein] + CoA. Component of the pyruvate dehydrogenase (PDH) complex, that catalyzes the overall conversion of pyruvate to acetyl-CoA and CO(2). The polypeptide is Dihydrolipoyllysine-residue acetyltransferase component of pyruvate dehydrogenase complex (dlaT) (Mycobacterium bovis (strain ATCC BAA-935 / AF2122/97)).